The chain runs to 536 residues: Cytochrome P450 monooxygenase phqM (536 aa).

Cys464 provides a ligand contact to heme.

This sequence belongs to the cytochrome P450 family. Requires heme as cofactor.

Its pathway is alkaloid biosynthesis. Cytochrome P450 monooxygenase; part of the gene cluster that mediates the biosynthesis of paraherquamide, a fungal indole alkaloid that belongs to a family of natural products containing a characteristic bicyclo[2.2.2]diazaoctane core. The first steps in the biosynthesis of paraherquamide is the production of the beta-methyl-proline precursor from L-isoleucine. They require oxidation of a terminally hydroxylated L-isoleucine to the corresponding aldehyde by enzymes which have still to be identified. Spontaneous cyclization and dehydration would yield the 4-methyl pyrolline-5-carboxylic acid, which is then reduced by the pyrroline-5-carboxylate reductase phqD leading to the beta-methyl-proline precursor. The next step of paraherquamide biosynthesis involves coupling of beta-methyl-proline and L-tryptophan by the bimodular NRPS phqB, to produce a monooxopiperazine intermediate. The reductase (R) domain of phqB utilizes NADPH for hydride transfer to reduce the thioester bond of the T domain-tethered linear dipeptide to a hemithioaminal intermediate, which spontaneously cleaves the C-S bond to release the aldehyde product. This compound undergoes spontaneous cyclization and dehydration to give a dienamine which is reverse prenylated at C-2 by the reverse prenyltransferase phqJ. The other prenyltransferase present in the cluster, phqI may be a redundant gene in the pathway. During biosynthetic assembly, the key step to produce the polycyclic core is catalyzed by the bifunctional reductase and intramolecular [4+2] Diels-Alderase, phqE, resulting in formation of the [2.2.2] diazaoctane intermediate preparaherquamide. Following formation of preparaherquamide, an indole 2,3-epoxidation-initiated pinacol-like rearrangement is catalyzed by the phqK FAD-dependent monooxygenase. The prenyltransferase phqA, the cytochrome P450 monooxygenase phqL, and the FAD-linked oxidoreductase phqH (or the cytochrome P450 monooxygenase phqM), are proposed to be involved in the formation of the pyran ring. The FAD-dependent monooxygenase phqK is likely responsible for generation of the spiro-oxindole, and the N-methylation is likely mediated by the phqN methyltransferase leading to the isolable natural product paraherquamide F. However, the order of these biosynthetic steps has still to be determined. In late-stage paraherquamide biosynthesis, the third P450 monooxygenase, phqO, is probably responsible for the C-14 hydroxylation, transforming paraherquamide F to paraherquamide G, and paraherquamide E to the final product paraherquamide A. The expansion from the 6-membered ring pyran (in paraherquamides F and G) to the 7-membered dioxepin ring (in paraherquamides A and E) represents a poorly understood but intriguing process that probably involves the 2-oxoglutarate-dependent dioxygenase phqC. Finally, the remaining members of the paraherquamide cluster, including phqI as well as phqM (or phqH), do not have a clearly prescribed role and appear to be redundant. This Penicillium fellutanum protein is Cytochrome P450 monooxygenase phqM.